The sequence spans 90 residues: Cell division topological specificity factor (90 aa).

This sequence belongs to the MinE family.

Prevents the cell division inhibition by proteins MinC and MinD at internal division sites while permitting inhibition at polar sites. This ensures cell division at the proper site by restricting the formation of a division septum at the midpoint of the long axis of the cell. The sequence is that of Cell division topological specificity factor from Brucella abortus (strain S19).